The chain runs to 282 residues: Biotin synthase (282 aa).

The Radical SAM core domain maps to 1–228 (MQEIFLCSIS…NARLMVAGGR (228 aa)). Positions 17, 21, and 24 each coordinate [4Fe-4S] cluster. [2Fe-2S] cluster is bound by residues Cys61, Cys96, Cys154, and Arg221.

It belongs to the radical SAM superfamily. Biotin synthase family. In terms of assembly, homodimer. Requires [4Fe-4S] cluster as cofactor. The cofactor is [2Fe-2S] cluster.

It carries out the reaction (4R,5S)-dethiobiotin + (sulfur carrier)-SH + 2 reduced [2Fe-2S]-[ferredoxin] + 2 S-adenosyl-L-methionine = (sulfur carrier)-H + biotin + 2 5'-deoxyadenosine + 2 L-methionine + 2 oxidized [2Fe-2S]-[ferredoxin]. It participates in cofactor biosynthesis; biotin biosynthesis; biotin from 7,8-diaminononanoate: step 2/2. Functionally, catalyzes the conversion of dethiobiotin (DTB) to biotin by the insertion of a sulfur atom into dethiobiotin via a radical-based mechanism. The sequence is that of Biotin synthase from Helicobacter pylori (strain ATCC 700392 / 26695) (Campylobacter pylori).